The chain runs to 352 residues: Ion-translocating oxidoreductase complex subunit D (352 aa).

The next 4 membrane-spanning stretches (helical) occupy residues 20–40, 42–62, 89–109, and 123–143; these read IMLLVLLAAVPGIAAQLWFFG, GTLVQILLASVSALLAEALVL, IPPLAPWWMVVLGTVFAVIIA, and PAMIGYVVLLISFPVQMTSWL. Thr-187 bears the FMN phosphoryl threonine mark. The next 5 membrane-spanning stretches (helical) occupy residues 214-234, 242-262, 267-287, 301-321, and 322-342; these read ILAGAGWQWVNLAWLAGGVWL, WHIPLSFLVTLALCATLGWLF, LASPQIHLLSGATMLGAFFIL, LIFGALAGLLVWLIRSFGGYP, and DGVAFAVLLANITVPLIDYYT.

It belongs to the NqrB/RnfD family. The complex is composed of six subunits: RsxA, RsxB, RsxC, RsxD, RsxE and RsxG. Requires FMN as cofactor.

It is found in the cell inner membrane. Its function is as follows. Part of a membrane-bound complex that couples electron transfer with translocation of ions across the membrane. Required to maintain the reduced state of SoxR. The chain is Ion-translocating oxidoreductase complex subunit D from Escherichia coli O17:K52:H18 (strain UMN026 / ExPEC).